The following is a 251-amino-acid chain: Capsid protein (251 aa).

Residues 3–20 (KRDAPWRLTAGTAKISRT) carry the Bipartite nuclear localization signal motif. The Nuclear localization signal motif lies at 35–49 (RASAWVNRPMYRKPR). Residues 63 to 80 (CEGPCKVQSFEQRHDVSH) fold into a zinc finger. A Nuclear export signal motif is present at residues 96-117 (ITHRVGKRFCVKSVYILGKIWM). The short motif at 195 to 242 (RRFWKVNNHVVYNHQEAGKYENHTENALLLYMACTHASNPVYATLKIR) is the Bipartite nuclear localization signal element.

It belongs to the geminiviridae capsid protein family. In terms of assembly, homomultimer. Binds to single-stranded and double-stranded viral DNA. Interacts (via nuclear localization signals) with host importin alpha-1a.

Its subcellular location is the virion. It is found in the host nucleus. Functionally, encapsidates the viral DNA into characteristic twinned ('geminate') particles. Binds the genomic viral ssDNA and shuttles it into and out of the cell nucleus. The CP of bipartite geminiviruses is not required for cell-to-cell or systemic movement. The protein is Capsid protein of Capsicum annuum (Capsicum pepper).